The chain runs to 216 residues: UPF0502 protein Spea_2482 (216 aa).

Belongs to the UPF0502 family.

In Shewanella pealeana (strain ATCC 700345 / ANG-SQ1), this protein is UPF0502 protein Spea_2482.